The primary structure comprises 125 residues: Actin, alpha skeletal muscle (125 aa).

It belongs to the actin family. In terms of assembly, polymerization of globular actin (G-actin) leads to a structural filament (F-actin) in the form of a two-stranded helix. Each actin can bind to 4 others. In terms of processing, methylated at His-75 by SETD3.

Its subcellular location is the cytoplasm. The protein localises to the cytoskeleton. Functionally, actins are highly conserved proteins that are involved in various types of cell motility and are ubiquitously expressed in all eukaryotic cells. The sequence is that of Actin, alpha skeletal muscle from Pleurodeles waltl (Iberian ribbed newt).